Reading from the N-terminus, the 202-residue chain is Thymidylate kinase (202 aa).

Position 7-14 (7-14) interacts with ATP; the sequence is GIDGSGKT.

It belongs to the thymidylate kinase family.

It catalyses the reaction dTMP + ATP = dTDP + ADP. Phosphorylation of dTMP to form dTDP in both de novo and salvage pathways of dTTP synthesis. This chain is Thymidylate kinase, found in Ehrlichia canis (strain Jake).